We begin with the raw amino-acid sequence, 135 residues long: D-ribose pyranase (135 aa).

Residue His-20 is the Proton donor of the active site. Substrate-binding positions include Asp-28, His-102, and 124–126 (YAN).

It belongs to the RbsD / FucU family. RbsD subfamily. As to quaternary structure, homodecamer.

The protein localises to the cytoplasm. The catalysed reaction is beta-D-ribopyranose = beta-D-ribofuranose. Its pathway is carbohydrate metabolism; D-ribose degradation; D-ribose 5-phosphate from beta-D-ribopyranose: step 1/2. In terms of biological role, catalyzes the interconversion of beta-pyran and beta-furan forms of D-ribose. The protein is D-ribose pyranase of Rhodopirellula baltica (strain DSM 10527 / NCIMB 13988 / SH1).